We begin with the raw amino-acid sequence, 356 residues long: Histidinol-phosphate aminotransferase (356 aa).

An N6-(pyridoxal phosphate)lysine modification is found at Lys213.

This sequence belongs to the class-II pyridoxal-phosphate-dependent aminotransferase family. Histidinol-phosphate aminotransferase subfamily. Homodimer. Pyridoxal 5'-phosphate is required as a cofactor.

It carries out the reaction L-histidinol phosphate + 2-oxoglutarate = 3-(imidazol-4-yl)-2-oxopropyl phosphate + L-glutamate. It participates in amino-acid biosynthesis; L-histidine biosynthesis; L-histidine from 5-phospho-alpha-D-ribose 1-diphosphate: step 7/9. The polypeptide is Histidinol-phosphate aminotransferase (Clostridium novyi (strain NT)).